The following is a 201-amino-acid chain: Bradykinin potentiating and C-type natriuretic peptides (201 aa).

The first 23 residues, 1 to 23 (MFVSRLAASGLLLLALLAVSLDG), serve as a signal peptide directing secretion. Positions 24-47 (KPVQQWSQNWPGPKVPPLVVQQWS) are excised as a propeptide. Gln-48 is subject to Pyrrolidone carboxylic acid. The propeptide occupies 58 to 60 (LVV). Gln-61 is subject to Pyrrolidone carboxylic acid. Propeptides lie at residues 67–95 (TQLQ…AALD) and 107–179 (GSKA…LAKK). Residues 90–172 (PDAALDTPPA…GGGGGGGARR (83 aa)) form a disordered region. A compositionally biased stretch (low complexity) spans 120-130 (SKGASATSTAS). The span at 132–142 (PMRDLRTDGKQ) shows a compositional bias: basic and acidic residues. Gly residues predominate over residues 159–170 (PGGGGGGGGGGA). Cys-185 and Cys-201 are joined by a disulfide.

The protein in the N-terminal section; belongs to the bradykinin-potentiating peptide family. This sequence in the central section; belongs to the bradykinin inhibitor peptide family. In the C-terminal section; belongs to the natriuretic peptide family. Venom gland.

Its subcellular location is the secreted. Its function is as follows. Inhibits the activity of the angiotensin-converting enzyme (ACE) by a preferential interaction with its C-domain. May also potentiate the hypotensive effects of bradykinin. In terms of biological role, antagonizes the vasodilatory actions of bradykinin at the B2 bradykinin receptor. Has a vasorelaxant activity in rat aortic strips and a diuretic potency in anesthetized rats. May act by activating natriuretic receptors (NPR1 and/or NPR2). This is Bradykinin potentiating and C-type natriuretic peptides from Sistrurus catenatus edwardsii (Desert massasauga).